A 238-amino-acid polypeptide reads, in one-letter code: Ribitol-5-phosphate cytidylyltransferase (238 aa).

CTP is bound by residues 7-10 (LAGG) and 81-87 (GSDRNET).

This sequence belongs to the IspD/TarI cytidylyltransferase family. TarI subfamily.

The catalysed reaction is D-ribitol 5-phosphate + CTP + H(+) = CDP-L-ribitol + diphosphate. Its pathway is cell wall biogenesis; poly(ribitol phosphate) teichoic acid biosynthesis. Functionally, catalyzes the transfer of the cytidylyl group of CTP to D-ribitol 5-phosphate. This chain is Ribitol-5-phosphate cytidylyltransferase, found in Staphylococcus saprophyticus subsp. saprophyticus (strain ATCC 15305 / DSM 20229 / NCIMB 8711 / NCTC 7292 / S-41).